A 663-amino-acid chain; its full sequence is MKDLFKIYSNYQPAGDQPTAIASLIDGLESGLAKQTLLGVTGSGKTFTIAHVIQAMKRPTLIMAPNKTLAAQLYGEFKAFFPDNAVEYFVSYYDYYQPEAYVPASDTFIEKDASINEHIEQMRLSATKALIERKDAIIVATVSAIYGLGDPDSYLRMLLHLSRGEQSDQRKILKRLAEMQYTRTNLSLERGQFRVHGDVIDIFPADSEKEAIRIELFDDEVDNIARFDPLTGEILQRLPRVTIFPKTHYVTPRERILETVEKVKVELQERLAELNAQNKLVEAQRLEQRTCFDIEMMLELGYCSGIENYSRYLSNREAGEAPPTLFDYLPPEALLIIDESHVTVPQIGGMYRGDRARKETLVNYGFRLPSALDNRPLRFEEFEERSPQTIYISATPGPYEQEHSDNVAEQVVRPTGLIDPEVEIRPVKTQVDDLMSEIRQVIAQGSRILVTTLTKRMAEDLTEYLSEHGIKVRYLHSDVDTVERMEIIRDLRLGEFDVLVGINLLREGLDMPEVALVAILDADKEGFLRSERSLIQTIGRAARNVKGRAILYADTMTGSMQRALTETERRREKQKAFNLKHGITPKGINKSVEDILEGAYIGKRKTMVAEQAPRYTHWSPQELAKEINALEKQMYAHAQNMEFELAAKIRDEYLLLKEQLMKI.

The 389-residue stretch at 26-414 (DGLESGLAKQ…DNVAEQVVRP (389 aa)) folds into the Helicase ATP-binding domain. 39–46 (GVTGSGKT) serves as a coordination point for ATP. The Beta-hairpin signature appears at 92 to 115 (YYDYYQPEAYVPASDTFIEKDASI). In terms of domain architecture, Helicase C-terminal spans 430-596 (QVDDLMSEIR…GINKSVEDIL (167 aa)). In terms of domain architecture, UVR spans 624–659 (AKEINALEKQMYAHAQNMEFELAAKIRDEYLLLKEQ).

Belongs to the UvrB family. Forms a heterotetramer with UvrA during the search for lesions. Interacts with UvrC in an incision complex.

It localises to the cytoplasm. Its function is as follows. The UvrABC repair system catalyzes the recognition and processing of DNA lesions. A damage recognition complex composed of 2 UvrA and 2 UvrB subunits scans DNA for abnormalities. Upon binding of the UvrA(2)B(2) complex to a putative damaged site, the DNA wraps around one UvrB monomer. DNA wrap is dependent on ATP binding by UvrB and probably causes local melting of the DNA helix, facilitating insertion of UvrB beta-hairpin between the DNA strands. Then UvrB probes one DNA strand for the presence of a lesion. If a lesion is found the UvrA subunits dissociate and the UvrB-DNA preincision complex is formed. This complex is subsequently bound by UvrC and the second UvrB is released. If no lesion is found, the DNA wraps around the other UvrB subunit that will check the other stand for damage. In Legionella pneumophila (strain Paris), this protein is UvrABC system protein B.